The sequence spans 417 residues: Gamma-glutamyl phosphate reductase (417 aa).

Belongs to the gamma-glutamyl phosphate reductase family.

Its subcellular location is the cytoplasm. The enzyme catalyses L-glutamate 5-semialdehyde + phosphate + NADP(+) = L-glutamyl 5-phosphate + NADPH + H(+). It functions in the pathway amino-acid biosynthesis; L-proline biosynthesis; L-glutamate 5-semialdehyde from L-glutamate: step 2/2. Functionally, catalyzes the NADPH-dependent reduction of L-glutamate 5-phosphate into L-glutamate 5-semialdehyde and phosphate. The product spontaneously undergoes cyclization to form 1-pyrroline-5-carboxylate. The protein is Gamma-glutamyl phosphate reductase of Hydrogenovibrio crunogenus (strain DSM 25203 / XCL-2) (Thiomicrospira crunogena).